We begin with the raw amino-acid sequence, 570 residues long: MPARISRATYAQMFGPTVGDKVRLADTDLIIEVERDLTTYGEEVKFGGGKVIRDGMGQSQLSRAEGAMDTVITNALILDHSGIYKADIGLLDGRIALIGKAGNPDTQPGISIIIGPGTEIIAGEGKIVTAGGIDTHVHFISPQQVDEALNAGITCMVGGGTGPAHGTLATTCTPGPWHIARLIQSFDGLPMNIGVFGKGNASLPGALEEMVRAGACGLKLHEDWGCTPAAIDNCLSVADHFDVQVAIHTDTLNEGGFVEDTLNAFKGRTIHSFHTEGAGGGHAPDIIRVCQYPNVLPASTNPTRPYTVNTIAEHLDMLMVCHHLSPAIPEDIAFAESRIRKETIAAEDILHDMGAFSIISSDSQAMGRVGEMIIRCWQTADKMKKQRGSLPDDRPGNDNYRARRYIAKYTINPAIAHGMAHEIGSVEVGKRADLVLWNPAFFGVKPDMVLLGGWIATAPMGDANGSIPTPQPMHTRPMFGSFGKALTNTSITFVSQAAMDEGLREKIGVDKQLVAVVNTRGGIGKHSMILNNAMPQMEVDPETYEVRADGELLTCEPVDVVPMAQRYFLF.

One can recognise a Urease domain in the interval 131–570; it reads GGIDTHVHFI…VPMAQRYFLF (440 aa). Residues histidine 136, histidine 138, and lysine 219 each coordinate Ni(2+). Lysine 219 carries the N6-carboxylysine modification. Histidine 221 lines the substrate pocket. The Ni(2+) site is built by histidine 248 and histidine 274. Catalysis depends on histidine 322, which acts as the Proton donor. Position 362 (aspartate 362) interacts with Ni(2+).

Belongs to the metallo-dependent hydrolases superfamily. Urease alpha subunit family. Heterotrimer of UreA (gamma), UreB (beta) and UreC (alpha) subunits. Three heterotrimers associate to form the active enzyme. The cofactor is Ni cation. Post-translationally, carboxylation allows a single lysine to coordinate two nickel ions.

It is found in the cytoplasm. It carries out the reaction urea + 2 H2O + H(+) = hydrogencarbonate + 2 NH4(+). Its pathway is nitrogen metabolism; urea degradation; CO(2) and NH(3) from urea (urease route): step 1/1. Functionally, may protect brucellae during their passage through the stomach. The major route of infection in human brucellosis is oral. The protein is Urease subunit alpha 1 of Brucella abortus (strain 2308).